We begin with the raw amino-acid sequence, 275 residues long: NH(3)-dependent NAD(+) synthetase (275 aa).

46-53 (GISGGQDS) lines the ATP pocket. A Mg(2+)-binding site is contributed by Asp52. Arg140 serves as a coordination point for deamido-NAD(+). Thr160 serves as a coordination point for ATP. Glu165 contacts Mg(2+). Residues Lys173 and Asp180 each contribute to the deamido-NAD(+) site. ATP-binding residues include Lys189 and Thr211. 260 to 261 (HK) lines the deamido-NAD(+) pocket.

The protein belongs to the NAD synthetase family. As to quaternary structure, homodimer.

It catalyses the reaction deamido-NAD(+) + NH4(+) + ATP = AMP + diphosphate + NAD(+) + H(+). It functions in the pathway cofactor biosynthesis; NAD(+) biosynthesis; NAD(+) from deamido-NAD(+) (ammonia route): step 1/1. In terms of biological role, catalyzes the ATP-dependent amidation of deamido-NAD to form NAD. Uses ammonia as a nitrogen source. The polypeptide is NH(3)-dependent NAD(+) synthetase (Shigella boydii serotype 18 (strain CDC 3083-94 / BS512)).